We begin with the raw amino-acid sequence, 526 residues long: ATP synthase subunit alpha (526 aa).

Residue 171-178 (GDRQTGKT) coordinates ATP.

The protein belongs to the ATPase alpha/beta chains family. In terms of assembly, F-type ATPases have 2 components, CF(1) - the catalytic core - and CF(0) - the membrane proton channel. CF(1) has five subunits: alpha(3), beta(3), gamma(1), delta(1), epsilon(1). CF(0) has four main subunits: a(1), b(1), b'(1) and c(9-12).

Its subcellular location is the cell inner membrane. It catalyses the reaction ATP + H2O + 4 H(+)(in) = ADP + phosphate + 5 H(+)(out). Its function is as follows. Produces ATP from ADP in the presence of a proton gradient across the membrane. The alpha chain is a regulatory subunit. This Chlorobium chlorochromatii (strain CaD3) protein is ATP synthase subunit alpha.